A 324-amino-acid chain; its full sequence is Biotin synthase (324 aa).

Residues 43 to 273 (FCGNYFNFCS…HVFLRLAGGR (231 aa)) form the Radical SAM core domain. C61, C65, and C68 together coordinate [4Fe-4S] cluster. S105, C138, C198, and R268 together coordinate [2Fe-2S] cluster.

Belongs to the radical SAM superfamily. Biotin synthase family. As to quaternary structure, homodimer. It depends on [4Fe-4S] cluster as a cofactor. [2Fe-2S] cluster serves as cofactor.

It carries out the reaction (4R,5S)-dethiobiotin + (sulfur carrier)-SH + 2 reduced [2Fe-2S]-[ferredoxin] + 2 S-adenosyl-L-methionine = (sulfur carrier)-H + biotin + 2 5'-deoxyadenosine + 2 L-methionine + 2 oxidized [2Fe-2S]-[ferredoxin]. It participates in cofactor biosynthesis; biotin biosynthesis; biotin from 7,8-diaminononanoate: step 2/2. Catalyzes the conversion of dethiobiotin (DTB) to biotin by the insertion of a sulfur atom into dethiobiotin via a radical-based mechanism. The protein is Biotin synthase of Campylobacter hominis (strain ATCC BAA-381 / DSM 21671 / CCUG 45161 / LMG 19568 / NCTC 13146 / CH001A).